Here is a 110-residue protein sequence, read N- to C-terminus: Large ribosomal subunit protein uL24 (110 aa).

This sequence belongs to the universal ribosomal protein uL24 family. Part of the 50S ribosomal subunit.

Its function is as follows. One of two assembly initiator proteins, it binds directly to the 5'-end of the 23S rRNA, where it nucleates assembly of the 50S subunit. In terms of biological role, one of the proteins that surrounds the polypeptide exit tunnel on the outside of the subunit. This chain is Large ribosomal subunit protein uL24, found in Chloroflexus aurantiacus (strain ATCC 29366 / DSM 635 / J-10-fl).